The sequence spans 120 residues: U13-barytoxin-Tl1a (120 aa).

The N-terminal stretch at 1–20 (MKTIIVFLSLLVLATKFGDA) is a signal peptide. Disulfide bonds link cysteine 75–cysteine 90, cysteine 82–cysteine 95, and cysteine 89–cysteine 109.

The protein belongs to the neurotoxin 14 (magi-1) family. 05 (ICK-7) subfamily. ICK-7 sub-subfamily. As to expression, expressed by the venom gland.

It is found in the secreted. Its function is as follows. Ion channel inhibitor. This Trittame loki (Brush-footed trapdoor spider) protein is U13-barytoxin-Tl1a.